The chain runs to 522 residues: MYIIESARQRPPKRKYLSSGRKSVFQKLYDLYIEECEKEPEVKKLRRNVNLLEKLVMQETLSCLVVNLYPGNEGYSLMLRGKNGSDSETIRLPYEEGELLEYLDAEELPPILVDLLEKSQVNIFHCGCVIAEIRDYRQSSNMKSPGYQSRHILLRPTMQTLICDVHSITSDNHKWTQEDKLLLESQLILATAEPLCLDPSIAVTCTANRLLYNKQKMNTRPMKRCFKRYSRSSLNRQQDLSHCPPPPQLRLLDFLQKRKERKAGQHYDLKISKAGNCVDMWKRSPCNLAIPSEVDVEKYAKVEKSIKSDDSQPTVWPAHDVKDDYVFECEASTQYQKTKLTILQSLGDPLYYGKIQPCKADEESDSQMSPSHSSTDDHSNWFIIGSKTDAERVVNQYQELVQNEAKCPVKMSHSSSGSASLSQVSPGKETEQTETVSVQSSVLGKGVKHRPPPIKLPSSSGNSSSGNYFSPQQTSSFLKSPTPPPSSKPPTIPRKSSVDLNQVSMLSPAALSPASSSQRHES.

Ser284 is subject to Phosphoserine. Disordered stretches follow at residues 361 to 380 (DEES…DHSN) and 408 to 522 (PVKM…RHES). Low complexity predominate over residues 412–425 (SHSSSGSASLSQVS). Positions 433–442 (TETVSVQSSV) are enriched in polar residues. A compositionally biased stretch (low complexity) spans 458–467 (SSSGNSSSGN). Residues 481-492 (PTPPPSSKPPTI) are compositionally biased toward pro residues. At Thr482 the chain carries Phosphothreonine. Positions 506 to 522 (LSPAALSPASSSQRHES) are enriched in low complexity. Residues Ser507 and Ser512 each carry the phosphoserine modification.

This sequence belongs to the SPT20 family. Interacts with ATG9A. Interacts with MAPK14.

Its function is as follows. Required for MAP kinase p38 (MAPK11, MAPK12, MAPK13 and/or MAPK14) activation during gastrulation. Required for down-regulation of E-cadherin during gastrulation by regulating E-cadherin protein level downstream from NCK-interacting kinase (NIK) and independently of the regulation of transcription by FGF signaling and Snail. Required for starvation-induced ATG9A trafficking during autophagy. This Pongo abelii (Sumatran orangutan) protein is Transcription factor SPT20 homolog (SUPT20H).